The primary structure comprises 943 residues: Protein translocase subunit SecA (943 aa).

ATP contacts are provided by residues Gln-90, 108-112 (GEGKT), and Asp-509. The segment at 535–560 (PNNEHKPPIPKQRSSKSKGGFSSKVG) is disordered. A compositionally biased stretch (low complexity) spans 551–560 (SKGGFSSKVG).

Belongs to the SecA family. As to quaternary structure, monomer and homodimer. Part of the essential Sec protein translocation apparatus which comprises SecA, SecYEG and auxiliary proteins SecDF. Other proteins may also be involved.

It is found in the cell inner membrane. The protein localises to the cellular thylakoid membrane. Its subcellular location is the cytoplasm. It carries out the reaction ATP + H2O + cellular proteinSide 1 = ADP + phosphate + cellular proteinSide 2.. Part of the Sec protein translocase complex. Interacts with the SecYEG preprotein conducting channel. Has a central role in coupling the hydrolysis of ATP to the transfer of proteins into and across the cell membrane, serving as an ATP-driven molecular motor driving the stepwise translocation of polypeptide chains across the membrane. Functionally, probably participates in protein translocation into and across both the cytoplasmic and thylakoid membranes in cyanobacterial cells. This Prochlorococcus marinus (strain MIT 9312) protein is Protein translocase subunit SecA.